Reading from the N-terminus, the 142-residue chain is Large ribosomal subunit protein uL13 (142 aa).

Belongs to the universal ribosomal protein uL13 family. In terms of assembly, part of the 50S ribosomal subunit.

This protein is one of the early assembly proteins of the 50S ribosomal subunit, although it is not seen to bind rRNA by itself. It is important during the early stages of 50S assembly. The sequence is that of Large ribosomal subunit protein uL13 from Idiomarina loihiensis (strain ATCC BAA-735 / DSM 15497 / L2-TR).